Here is a 184-residue protein sequence, read N- to C-terminus: Glutathione-regulated potassium-efflux system ancillary protein KefG (184 aa).

This sequence belongs to the NAD(P)H dehydrogenase (quinone) family. KefG subfamily. Interacts with KefB.

Its subcellular location is the cell inner membrane. The enzyme catalyses a quinone + NADH + H(+) = a quinol + NAD(+). It carries out the reaction a quinone + NADPH + H(+) = a quinol + NADP(+). Functionally, regulatory subunit of a potassium efflux system that confers protection against electrophiles. Required for full activity of KefB. The chain is Glutathione-regulated potassium-efflux system ancillary protein KefG from Escherichia coli O8 (strain IAI1).